Here is a 390-residue protein sequence, read N- to C-terminus: Galactokinase (390 aa).

33 to 36 (EHTD) lines the substrate pocket. Residues serine 67 and 124–130 (GAGLSSS) each bind ATP. The Mg(2+) site is built by serine 130 and glutamate 162. Catalysis depends on aspartate 174, which acts as the Proton acceptor. Residue tyrosine 224 participates in substrate binding.

This sequence belongs to the GHMP kinase family. GalK subfamily.

The protein resides in the cytoplasm. The catalysed reaction is alpha-D-galactose + ATP = alpha-D-galactose 1-phosphate + ADP + H(+). Its pathway is carbohydrate metabolism; galactose metabolism. Functionally, catalyzes the transfer of the gamma-phosphate of ATP to D-galactose to form alpha-D-galactose-1-phosphate (Gal-1-P). This chain is Galactokinase, found in Exiguobacterium sibiricum (strain DSM 17290 / CCUG 55495 / CIP 109462 / JCM 13490 / 255-15).